A 376-amino-acid polypeptide reads, in one-letter code: 12-oxophytodienoate reductase 1 (376 aa).

FMN-binding positions include 35-37 (PLT), Ala68, and Gln110. Substrate is bound by residues Ser143 and 187-190 (HGAH). The Proton donor role is filled by Tyr192. Residue Arg239 coordinates FMN. Arg279 lines the substrate pocket. FMN contacts are provided by residues Gly309 and 330–331 (GR).

The protein belongs to the NADH:flavin oxidoreductase/NADH oxidase family. The cofactor is FMN. In terms of tissue distribution, constitutively expressed in roots, leaves, cotyledons, cells culture and to a lower extent in flowers.

It is found in the cytoplasm. The enzyme catalyses (1S,2S)-OPC-8 + NADP(+) = (9S,13S,15Z)-12-oxophyto-10,15-dienoate + NADPH + H(+). The protein operates within lipid metabolism; oxylipin biosynthesis. Functionally, specifically cleaves olefinic bonds in alpha,beta-unsaturated carbonyls and may be involved in detoxification or modification of these reactive compounds. May be involved in the biosynthesis or metabolism of oxylipin signaling molecules. In vitro, reduces 9R,13R-12-oxophyodienoic acid (9R,13R-OPDA) to 9R,13R-OPC-8:0, but not 9S,13S-OPDA, the natural precursor of jasmonic acid. Also reduces N-ethylmaleimide and maleic acid. In Solanum lycopersicum (Tomato), this protein is 12-oxophytodienoate reductase 1 (OPR1).